We begin with the raw amino-acid sequence, 229 residues long: Clathrin light chain B (229 aa).

The segment covering 1-17 (MADDFGFFSSSESGAPE) has biased composition (low complexity). The interval 1–82 (MADDFGFFSS…NGDVFQEANG (82 aa)) is disordered. Residues Ser11 and Ser13 each carry the phosphoserine modification. Residues 58–73 (GPTSGAGSEDMGTTVN) are compositionally biased toward polar residues. Residues 93–155 (ADRLTQEPES…QVEKNKINNR (63 aa)) form an involved in binding clathrin heavy chain region. Phosphothreonine is present on Thr187. A disulfide bridge connects residues Cys199 and Cys209. An N6-acetyllysine modification is found at Lys204. Residue Ser217 is modified to Phosphoserine.

It belongs to the clathrin light chain family. As to quaternary structure, clathrin coats are formed from molecules containing 3 heavy chains and 3 light chains. Interacts (via N-terminus) with HIP1. Interacts with HIP1R.

Its subcellular location is the cytoplasmic vesicle membrane. It localises to the membrane. It is found in the coated pit. Clathrin is the major protein of the polyhedral coat of coated pits and vesicles. This is Clathrin light chain B (CLTB) from Homo sapiens (Human).